Consider the following 411-residue polypeptide: Corticotropin-releasing factor receptor 2 (411 aa).

The segment at residues 1 to 19 is a signal peptide (not cleaved); it reads MDAALLLSLLEANCSLALA. The Extracellular portion of the chain corresponds to 1-108; that stretch reads MDAALLLSLL…EPILDDKQRK (108 aa). Residues Asn-13, Asn-41, Asn-74, Asn-86, and Asn-94 are each glycosylated (N-linked (GlcNAc...) asparagine). Intrachain disulfides connect Cys-14–Cys-50, Cys-40–Cys-83, and Cys-64–Cys-98. Residues 109 to 139 form a helical membrane-spanning segment; it reads YDLHYRIALIINYLGHCVSVVALVAAFLLFL. The Cytoplasmic segment spans residues 140–146; sequence VLRSIRC. The chain crosses the membrane as a helical span at residues 147-171; the sequence is LRNVIHWNLITTFILRNITWFLLQL. The Extracellular segment spans residues 172-185; sequence IDHEVHEGNEVWCR. Cys-184 and Cys-254 are disulfide-bonded. The helical transmembrane segment at 186–214 threads the bilayer; that stretch reads CVTTIFNYFVVTNFFWMFVEGCYLHTAIV. The Cytoplasmic portion of the chain corresponds to 215–221; sequence MTYSTEH. The chain crosses the membrane as a helical span at residues 222–249; sequence LRKWLFLFIGWCIPCPIIVAWAVGKLYY. At 250-265 the chain is on the extracellular side; the sequence is ENEQCWFGKEPGDLVD. A helical membrane pass occupies residues 266–291; that stretch reads YIYQGPIILVLLINFVFLFNIVRILM. Topologically, residues 292–302 are cytoplasmic; it reads TKLRASTTSET. A helical membrane pass occupies residues 303 to 327; sequence IQYRKAVKATLVLLPLLGITYMLFF. The Extracellular segment spans residues 328–334; sequence VNPGEDD. The chain crosses the membrane as a helical span at residues 335 to 364; it reads LSQIVFIYFNSFLQSFQGFFVSVFYCFFNG. The Cytoplasmic portion of the chain corresponds to 365-411; the sequence is EVRSALRKRWHRWQDHHALRVPVARAMSIPTSPTRISFHSIKQTAAV.

This sequence belongs to the G-protein coupled receptor 2 family. In terms of assembly, monomer. Interacts (via N-terminal extracellular domain) with CRF, UCN, UCN2 and UCN3. In terms of processing, a N-glycosylation site within the signal peptide impedes its proper cleavage and function. In terms of tissue distribution, predominantly expressed in limbic regions of the brain such as the lateral septum, the entorhinal cortex, the hypothalamic ventromedial nucleus and several amygdaloid nuclei. Also detectable in lung, kidney and heart.

The protein localises to the cell membrane. Functionally, G-protein coupled receptor for CRH (corticotropin-releasing factor), UCN (urocortin), UCN2 and UCN3. Has high affinity for UCN. Ligand binding causes a conformation change that triggers signaling via guanine nucleotide-binding proteins (G proteins) and down-stream effectors, such as adenylate cyclase. Promotes the activation of adenylate cyclase, leading to increased intracellular cAMP levels. The chain is Corticotropin-releasing factor receptor 2 (Crhr2) from Rattus norvegicus (Rat).